A 186-amino-acid chain; its full sequence is Lipid A palmitoyltransferase PagP (186 aa).

An N-terminal signal peptide occupies residues 1 to 25 (MNVSKYVAIFSFVFIQLISVGKVFA). Residues His58, Asp101, and Ser102 contribute to the active site.

It belongs to the lipid A palmitoyltransferase family. In terms of assembly, homodimer.

It localises to the cell outer membrane. The enzyme catalyses lipid A (E. coli) + a 1-hexadecanoyl-2-acyl-sn-glycero-3-phosphocholine = hepta-acyl lipid A (E. coli) + a 2-acyl-sn-glycero-3-phosphocholine. The catalysed reaction is lipid IIA + a 1-hexadecanoyl-2-acyl-sn-glycero-3-phosphocholine = lipid IIB + a 2-acyl-sn-glycero-3-phosphocholine. It carries out the reaction lipid IVA (E. coli) + a 1-hexadecanoyl-2-acyl-sn-glycero-3-phosphocholine = lipid IVB (E. coli) + a 2-acyl-sn-glycero-3-phosphocholine. Functionally, transfers a palmitate residue from the sn-1 position of a phospholipid to the N-linked hydroxymyristate on the proximal unit of lipid A or its precursors. This Escherichia coli O157:H7 protein is Lipid A palmitoyltransferase PagP.